Here is a 312-residue protein sequence, read N- to C-terminus: MAAGPNGLEEWVGSAYLFVESSLDKVVLSDAYAHQQQKVAMYGALQTALAESGGSPDVLQMLKIHRSDPQLIVQLRFSGRQACSRFLRAYREGALRATLQGCLARALALNSVPLQLELRAGAEQLDALLTNEERCLNCICAQKPDRLRDEELTELENALRNLTCGSAGGQGSDVQGTPAPLQSLAPSPPEEKPPPPQPGQTFLFQGQPIVNRPLNLQDQQKFARSVGLKWRKVGRSLQRSCRALRDPALDSLAYEYERDGLYEQAFQLLRRFVQAEGRRATLQRLVEALEENELTSLAEDLLGLANPDGSLA.

Residues 147 to 163 carry the Nuclear export signal motif; that stretch reads LRDEELTELENALRNLT. Residues 166-200 form a disordered region; it reads SAGGQGSDVQGTPAPLQSLAPSPPEEKPPPPQPGQ. The Death domain occupies 215–305; that stretch reads NLQDQQKFAR…SLAEDLLGLA (91 aa). Residues 222 to 289 form an interaction with KRT14 and KRT18 region; that stretch reads FARSVGLKWR…ATLQRLVEAL (68 aa). Positions 231 to 244 match the Nuclear localization signal motif; that stretch reads RKVGRSLQRSCRAL.

Stimulation of TNF-alpha receptor TNFRSF1A leads to the formation of two distinct signaling complexes. Plasma membrane-bound complex I is composed of TNFRSF1A, TRADD, RIPK1, TRAF2 and BIRC2/c-IAP1 or BIRC3 which interacts with CHUCK/IKK-alpha, IKBKB/IKK-beta and IKBKG/IKK-gamma promoting cell survival. Subsequently, TRADD, RIPK1 and TRAF2 dissociate from TNFRSF1A and form cytoplasmic complex II with FADD and caspase CASP8 promoting cell apoptosis. Within complex I, interacts with TNFRSF1A/TNFR1, TRAF2 and kinase RIPK1. Within complex I, interacts with TRPC4AP; the interaction promotes NF-kappa B activation. UXT1 associates with complex I; the interaction prevents the formation of complex II. Within complex I Interacts with scaffold protein DAB2IP. Interacts with autophagy receptor SQSTM1. Interacts with E3 ligase TRIP12. Interacts with kinase HIPK2. Interacts with keratin KRT14. Interacts with keratin KRT18. Interacts with keratins KRT16 and KRT17. Interacts with FADD. Interacts with TOMM70. Interacts with TMC8; the interaction impairs the formation of complex I and facilites complex II formation.

Its subcellular location is the nucleus. The protein localises to the cytoplasm. It is found in the cytoskeleton. In terms of biological role, adapter molecule for TNFRSF1A/TNFR1 that specifically associates with the cytoplasmic domain of activated TNFRSF1A/TNFR1 mediating its interaction with FADD. Overexpression of TRADD leads to two major TNF-induced responses, apoptosis and activation of NF-kappa-B. The nuclear form acts as a tumor suppressor by preventing ubiquitination and degradation of isoform p19ARF/ARF of CDKN2A by TRIP12: acts by interacting with TRIP12, leading to disrupt interaction between TRIP12 and isoform p19ARF/ARF of CDKN2A. The polypeptide is Tumor necrosis factor receptor type 1-associated DEATH domain protein (Bos taurus (Bovine)).